The chain runs to 236 residues: MLTRKQYDLLRFIHERLKETGVPPSFDEMKEALDLRSKSGIHRLITALEERGFIRRLPNRARALEVVRLPDSAAPGLAAARSGGRGFSPSVIEGSLGRVRPVVDDEEPAAVVAVPVMGRIAAGSPISAIQTRSNTLNLPPEMLGTGEHFALEVRGDSMIEAGILDGDTVLIRKCDTADTGDIIVALVDDEEATLKRLRRKGASIALEAANPAYETRIFGPDRVRIQGRLVGLIRRY.

Residues 26-46 constitute a DNA-binding region (H-T-H motif); sequence FDEMKEALDLRSKSGIHRLIT. Catalysis depends on for autocatalytic cleavage activity residues S157 and K195.

The protein belongs to the peptidase S24 family. In terms of assembly, homodimer.

It carries out the reaction Hydrolysis of Ala-|-Gly bond in repressor LexA.. Functionally, represses a number of genes involved in the response to DNA damage (SOS response), including recA and lexA. In the presence of single-stranded DNA, RecA interacts with LexA causing an autocatalytic cleavage which disrupts the DNA-binding part of LexA, leading to derepression of the SOS regulon and eventually DNA repair. In Azorhizobium caulinodans (strain ATCC 43989 / DSM 5975 / JCM 20966 / LMG 6465 / NBRC 14845 / NCIMB 13405 / ORS 571), this protein is LexA repressor.